The primary structure comprises 843 residues: Urease (843 aa).

One can recognise a Urease domain in the interval 400-843; the sequence is GGIDCHVHFI…VPLSRNYFLF (444 aa). Ni(2+)-binding residues include H405, H407, and K488. K488 is modified (N6-carboxylysine). Substrate is bound at residue H490. Ni(2+) is bound by residues H517 and H543. The active-site Proton donor is H591. Residue D631 participates in Ni(2+) binding.

This sequence in the C-terminal section; belongs to the metallo-dependent hydrolases superfamily. Urease alpha subunit family. Homohexamer. Other oligomeric forms may exist depending on pH and presence of salts. It depends on Ni(2+) as a cofactor. Carboxylation allows a single lysine to coordinate two nickel ions.

The enzyme catalyses urea + 2 H2O + H(+) = hydrogencarbonate + 2 NH4(+). It participates in nitrogen metabolism; urea degradation; CO(2) and NH(3) from urea (urease route): step 1/1. In terms of biological role, urea hydrolase involved in nitrogen recycling from ureide, purine, and arginine catabolism. The protein is Urease of Oryza sativa subsp. indica (Rice).